The primary structure comprises 329 residues: Carrier protein YMC2, mitochondrial (329 aa).

Residues 1–27 (MSEEFPTPQLLDELEDQQKVTTPNEKR) are disordered. Residues 1-33 (MSEEFPTPQLLDELEDQQKVTTPNEKRELSSNR) constitute a mitochondrion transit peptide. Solcar repeat units lie at residues 34–115 (VLKD…MKRF), 143–226 (SQYY…LVAR), and 238–325 (PPWK…VMRF). The next 6 membrane-spanning stretches (helical) occupy residues 38-58 (IFAGTIGGIAQVLVGQPFDTT), 84-104 (VFAFYKGALTPLLGVGICVSV), 140-160 (LPLSQYYVCGLTGGVVNSFLA), 205-225 (TMIRAGHGLGTYFLVYEALVA), 243-263 (CLFGAFSGTMLWLTVYPLDVV), and 297-318 (FFKGFGPTMVRSAPVNGATFLT).

It belongs to the mitochondrial carrier (TC 2.A.29) family.

The protein localises to the mitochondrion inner membrane. This Saccharomyces cerevisiae (strain ATCC 204508 / S288c) (Baker's yeast) protein is Carrier protein YMC2, mitochondrial (YMC2).